Here is a 1170-residue protein sequence, read N- to C-terminus: Glucose transport transcription regulator RGT1 (1170 aa).

Polar residues predominate over residues 1 to 22 (MNELNTVSTNSSDSTKNGGTSN). Positions 1 to 46 (MNELNTVSTNSSDSTKNGGTSNSPDDMDSAAAASHAIKKRTKASRA) are disordered. The zn(2)-C6 fungal-type DNA-binding region spans 47–76 (CDQCRKKKIKCDYKDEKGVCSNCQRNGDRC). Positions 77-149 (SFDRVPLKRG…PSTPSRSNSV (73 aa)) are disordered. The span at 99–108 (RTNEIQDHNN) shows a compositional bias: basic and acidic residues. Residues 113-138 (NTFDNSNNTLNNNTGNSGDNGINSNT) show a composition bias toward low complexity. Over residues 139–149 (VPSTPSRSNSV) the composition is skewed to polar residues. 4 positions are modified to phosphoserine: serine 202, serine 205, serine 208, and serine 229. Disordered stretches follow at residues 226 to 254 (VQQS…SASG), 269 to 288 (APTD…IPSL), 293 to 323 (SNSL…LQQG), 384 to 506 (AQQT…HPMT), and 944 to 977 (NYRP…SAAP). The segment covering 239-250 (SGNANGSVTGSG) has biased composition (low complexity). Residues 271–280 (TDDHNGEQTR) are compositionally biased toward basic and acidic residues. A phosphoserine mark is found at serine 283 and serine 284. Low complexity-rich tracts occupy residues 293–302 (SNSLLLGGQP), 309–323 (QQSQ…LQQG), and 385–397 (QQTQ…QVPQ). Phosphoserine occurs at positions 410 and 414. Polar residues predominate over residues 411 to 422 (APVSVTLSTDRL). Low complexity predominate over residues 424-444 (GNENNNGEINNNNGSNNSGSS). Over residues 445–457 (KDTSQHSQESVTT) the composition is skewed to polar residues. Positions 473-488 (STKKRRKSYVSKKTKP) are enriched in basic residues. Positions 493 to 506 (SISITSKDSAHPMT) are enriched in polar residues. A Phosphoserine modification is found at serine 1130.

This sequence belongs to the EDS1/RGT1 family. Glucose-induced phosphorylation regulates the DNA-binding activity. Hyperphosphorylation in cells growing on high levels of glucose does prevents DNA-binding and dephosphorylation restores DNA-binding ability.

The protein resides in the nucleus. The protein localises to the cytoplasm. Functionally, glucose-responsive transcription factor that regulates expression of several glucose transporter (HXT) genes in response to glucose. In the absence of glucose, it functions as a transcriptional repressor, whereas high concentrations of glucose cause it to function as a transcriptional activator. In cells growing on low levels of glucose, has a neutral role, neither repressing nor activating transcription. Binds the consensus binding site sequence 5'-CGGANNA-3', of which multiple copies are present in all HXT promoters regulated by RGT1. This is Glucose transport transcription regulator RGT1 (RGT1) from Saccharomyces cerevisiae (strain RM11-1a) (Baker's yeast).